Reading from the N-terminus, the 304-residue chain is Probable alpha-L-glutamate ligase 2 (304 aa).

In terms of domain architecture, ATP-grasp spans 107–290; the sequence is HQLLARKGVG…IAGAIIDYIV (184 aa). ATP is bound by residues Lys-144, 181–182, Asp-190, and 214–216; these read EF and RSN. 3 residues coordinate Mg(2+): Asp-251, Glu-263, and Asn-265. 3 residues coordinate Mn(2+): Asp-251, Glu-263, and Asn-265.

The protein belongs to the RimK family. It depends on Mg(2+) as a cofactor. Requires Mn(2+) as cofactor.

This is Probable alpha-L-glutamate ligase 2 from Hahella chejuensis (strain KCTC 2396).